Here is a 206-residue protein sequence, read N- to C-terminus: Outer-membrane lipoprotein carrier protein (206 aa).

An N-terminal signal peptide occupies residues 1 to 21 (MKKLLCAVLLSPLLYSNAVLA).

It belongs to the LolA family. In terms of assembly, monomer.

The protein localises to the periplasm. Functionally, participates in the translocation of lipoproteins from the inner membrane to the outer membrane. Only forms a complex with a lipoprotein if the residue after the N-terminal Cys is not an aspartate (The Asp acts as a targeting signal to indicate that the lipoprotein should stay in the inner membrane). The protein is Outer-membrane lipoprotein carrier protein of Shewanella oneidensis (strain ATCC 700550 / JCM 31522 / CIP 106686 / LMG 19005 / NCIMB 14063 / MR-1).